A 615-amino-acid polypeptide reads, in one-letter code: Ras association domain-containing protein 1 homolog (615 aa).

Disordered regions lie at residues 1–29 and 69–89; these read MLRS…PTYQ and SDDE…QSIG. Low complexity predominate over residues 76–87; the sequence is TSSTSSPQSEQS. A Phorbol-ester/DAG-type zinc finger spans residues 164–214; the sequence is NHSFKTHSLLHPTWCDKCGDFIWGILKEALKCEHCNYTCHARCRDLVTLDC. The disordered stretch occupies residues 249–268; sequence PAMSSSTGSDKENGNGNSAG. The span at 251-268 shows a compositional bias: polar residues; sequence MSSSTGSDKENGNGNSAG. The Ras-associating domain maps to 396–496; the sequence is KTTSLRTITS…RALVLQENDT (101 aa). The SARAH domain maps to 498-545; the sequence is DILWDAFEIPELENFLRILGMEEKQYVFQTQQKYQQYRYHLDAELRQR.

As to quaternary structure, interacts with rab-39 (GTP-bound form). Interacts (via SARAH domain) with cst-1; the interaction is required for the phosphorylation of cst-1. Expressed in the pharynx, epithelial cells, ciliated neurons in the head, body wall muscles, hypodermis, vulva, gonadal sheath cells, tail hypodermis and in coelomocytes. As to expression, expressed in the pharynx, neurons and vulva.

The protein localises to the cytoplasm. The protein resides in the cytoskeleton. Its function is as follows. Involved in embryonic morphogenesis. Plays a role in the organization of apical filamentous actin in epithelial cells of the developing embryo. May play a role in let-60-mediated vulval development. May induce nuclear condensation. Positively regulates the oxidative stress response, and this may be in association with the small GTPase rab-39. Not required for muscle integrity. In Caenorhabditis elegans, this protein is Ras association domain-containing protein 1 homolog.